The following is a 327-amino-acid chain: Malate dehydrogenase (327 aa).

12–18 is a binding site for NAD(+); that stretch reads GAAGQIG. Arginine 93 and arginine 99 together coordinate substrate. Residues asparagine 106, glutamine 113, and 130–132 contribute to the NAD(+) site; that span reads VGN. Residues asparagine 132 and arginine 163 each contribute to the substrate site. The active-site Proton acceptor is histidine 188.

Belongs to the LDH/MDH superfamily. MDH type 2 family.

The enzyme catalyses (S)-malate + NAD(+) = oxaloacetate + NADH + H(+). Catalyzes the reversible oxidation of malate to oxaloacetate. This is Malate dehydrogenase from Paraburkholderia phymatum (strain DSM 17167 / CIP 108236 / LMG 21445 / STM815) (Burkholderia phymatum).